The primary structure comprises 251 residues: MAAEPTIDALGQFRLHHGLGPIGGLVNFTQSNEIMVLGTAIVLGIIALGMRQRAVVPGRLQSLVEISYNFIMGLCIEQIGHEGKKFFPFIFTLFFFVLMGNLLGLFPYFFTYTSHVAVTGGLAVLVIVLVTAVALRYHGLHFFSYFFPPGAPKALAPIIVPIEIISYLSRPVSLSIRLFANMVAGHVMFEVFATFMFLLIGALGTFGYFAALLPMTLNVTLVGFELLVAFLQAYVFAILTCIYLHDAVHLH.

Helical transmembrane passes span 28 to 48 (FTQSNEIMVLGTAIVLGIIAL), 63 to 80 (LVEISYNFIMGLCIEQIG), 86 to 106 (FFPFIFTLFFFVLMGNLLGLF), 115 to 135 (HVAVTGGLAVLVIVLVTAVAL), 154 to 176 (ALAPIIVPIEIISYLSRPVSLSI), 195 to 215 (FMFLLIGALGTFGYFAALLPM), and 219 to 239 (VTLVGFELLVAFLQAYVFAIL).

Belongs to the ATPase A chain family. In terms of assembly, F-type ATPases have 2 components, CF(1) - the catalytic core - and CF(0) - the membrane proton channel. CF(1) has five subunits: alpha(3), beta(3), gamma(1), delta(1), epsilon(1). CF(0) has three main subunits: a(1), b(2) and c(9-12). The alpha and beta chains form an alternating ring which encloses part of the gamma chain. CF(1) is attached to CF(0) by a central stalk formed by the gamma and epsilon chains, while a peripheral stalk is formed by the delta and b chains.

It is found in the cell inner membrane. Functionally, key component of the proton channel; it plays a direct role in the translocation of protons across the membrane. The protein is ATP synthase subunit a of Granulibacter bethesdensis (strain ATCC BAA-1260 / CGDNIH1).